Reading from the N-terminus, the 253-residue chain is 4-hydroxy-tetrahydrodipicolinate reductase (253 aa).

NAD(+) is bound at residue 16-21 (GDTGRM). Residue arginine 44 participates in NADP(+) binding. NAD(+) contacts are provided by residues 85-87 (GTT) and 111-114 (CANT). The Proton donor/acceptor role is filled by histidine 144. Histidine 145 lines the (S)-2,3,4,5-tetrahydrodipicolinate pocket. Catalysis depends on lysine 148, which acts as the Proton donor. 154–155 (GT) contributes to the (S)-2,3,4,5-tetrahydrodipicolinate binding site.

Belongs to the DapB family.

It is found in the cytoplasm. It carries out the reaction (S)-2,3,4,5-tetrahydrodipicolinate + NAD(+) + H2O = (2S,4S)-4-hydroxy-2,3,4,5-tetrahydrodipicolinate + NADH + H(+). The enzyme catalyses (S)-2,3,4,5-tetrahydrodipicolinate + NADP(+) + H2O = (2S,4S)-4-hydroxy-2,3,4,5-tetrahydrodipicolinate + NADPH + H(+). It participates in amino-acid biosynthesis; L-lysine biosynthesis via DAP pathway; (S)-tetrahydrodipicolinate from L-aspartate: step 4/4. In terms of biological role, catalyzes the conversion of 4-hydroxy-tetrahydrodipicolinate (HTPA) to tetrahydrodipicolinate. This is 4-hydroxy-tetrahydrodipicolinate reductase from Chlamydia trachomatis serovar A (strain ATCC VR-571B / DSM 19440 / HAR-13).